Reading from the N-terminus, the 208-residue chain is Small ribosomal subunit protein eS8 (208 aa).

The segment at 1–27 (MGISRDNWHKRRKTGGKRKPYHKKRKY) is disordered. Residue Gly-2 is the site of N-myristoyl glycine attachment. The span at 8-26 (WHKRRKTGGKRKPYHKKRK) shows a compositional bias: basic residues. N6-acetyllysine occurs at positions 37 and 128. At Thr-130 the chain carries Phosphothreonine. Ser-160 bears the Phosphoserine mark. Glycyl lysine isopeptide (Lys-Gly) (interchain with G-Cter in SUMO2) cross-links involve residues Lys-170 and Lys-193.

It belongs to the eukaryotic ribosomal protein eS8 family. In terms of assembly, component of the small ribosomal subunit. Identified in a IGF2BP1-dependent mRNP granule complex containing untranslated mRNAs. Part of the small subunit (SSU) processome, composed of more than 70 proteins and the RNA chaperone small nucleolar RNA (snoRNA) U3.

Its subcellular location is the cytoplasm. The protein localises to the membrane. It localises to the nucleus. The protein resides in the nucleolus. Its function is as follows. Component of the small ribosomal subunit. The ribosome is a large ribonucleoprotein complex responsible for the synthesis of proteins in the cell. Part of the small subunit (SSU) processome, first precursor of the small eukaryotic ribosomal subunit. During the assembly of the SSU processome in the nucleolus, many ribosome biogenesis factors, an RNA chaperone and ribosomal proteins associate with the nascent pre-rRNA and work in concert to generate RNA folding, modifications, rearrangements and cleavage as well as targeted degradation of pre-ribosomal RNA by the RNA exosome. This Mus musculus (Mouse) protein is Small ribosomal subunit protein eS8 (Rps8).